A 528-amino-acid chain; its full sequence is Zinc finger protein 16-like (528 aa).

The disordered stretch occupies residues 1–28 (MSRKRNHCYMETGASSESQGAFVDSAGP). Residues 79 to 106 (IRVLKMELREKSDEIELLKAKLESAEKD) are a coiled coil. Disordered stretches follow at residues 159–202 (GAAE…TDAE) and 232–293 (FKGD…DRME). Positions 232–242 (FKGDSETKCED) are enriched in basic and acidic residues. The segment covering 244-256 (PPMDEEDENEDSE) has biased composition (acidic residues). Basic and acidic residues-rich tracts occupy residues 257 to 270 (EGRG…DHFP) and 278 to 293 (GEDR…DRME). The C2H2-type 1 zinc finger occupies 303 to 326 (FICPFCGTLCPDSSFLEEHIKLMH). A compositionally biased stretch (low complexity) spans 333 to 345 (QSTSAGSSSQAEG). The segment at 333 to 359 (QSTSAGSSSQAEGDSGEAGPASRGARE) is disordered. 4 C2H2-type zinc fingers span residues 366 to 388 (YECG…QRIH), 394 to 416 (FVCP…RLSH), 423 to 445 (FPCP…QRVH), and 451 to 473 (YACP…MRIH). The C2H2-type 6; degenerate zinc-finger motif lies at 479–501 (YTCYQCGRSFRHLGTYKSHRCMP). Residues 502–528 (ATQMPSEHSPPWAQEDKVQTGRLQGYV) form a disordered region.

It belongs to the krueppel C2H2-type zinc-finger protein family.

It localises to the nucleus. Its function is as follows. Probable transcription factor. Important for development and migration of oligodendrocyte precursor cells, and normal myelination of axons in the central nervous system (CNS). Functions autonomously in oligodendrocytes to promote CNS myelination. Seems to act in parallel with notch3 during oligodendrocyte development. The chain is Zinc finger protein 16-like from Danio rerio (Zebrafish).